A 482-amino-acid chain; its full sequence is 3-isopropylmalate dehydratase large subunit (482 aa).

The tract at residues 60–79 (ATPDHNVPTTRAERQGGLES) is disordered. Positions 353, 414, and 417 each coordinate [4Fe-4S] cluster.

It belongs to the aconitase/IPM isomerase family. LeuC type 1 subfamily. In terms of assembly, heterodimer of LeuC and LeuD. [4Fe-4S] cluster is required as a cofactor.

The enzyme catalyses (2R,3S)-3-isopropylmalate = (2S)-2-isopropylmalate. It participates in amino-acid biosynthesis; L-leucine biosynthesis; L-leucine from 3-methyl-2-oxobutanoate: step 2/4. In terms of biological role, catalyzes the isomerization between 2-isopropylmalate and 3-isopropylmalate, via the formation of 2-isopropylmaleate. This Xanthomonas euvesicatoria pv. vesicatoria (strain 85-10) (Xanthomonas campestris pv. vesicatoria) protein is 3-isopropylmalate dehydratase large subunit.